Reading from the N-terminus, the 180-residue chain is NADH-quinone oxidoreductase subunit I (180 aa).

4Fe-4S ferredoxin-type domains lie at 50-80 (LTRDPDGEERCVACNLCAVACPVGCISLQKA) and 90-119 (EFFRINFSRCIFCGLCEEACPTTAIQLTPD). Residues cysteine 60, cysteine 63, cysteine 66, cysteine 70, cysteine 99, cysteine 102, cysteine 105, and cysteine 109 each contribute to the [4Fe-4S] cluster site.

This sequence belongs to the complex I 23 kDa subunit family. NDH-1 is composed of 13 different subunits. Subunits NuoA, H, J, K, L, M, N constitute the membrane sector of the complex. [4Fe-4S] cluster serves as cofactor.

The protein localises to the cell inner membrane. It catalyses the reaction a quinone + NADH + 5 H(+)(in) = a quinol + NAD(+) + 4 H(+)(out). Its function is as follows. NDH-1 shuttles electrons from NADH, via FMN and iron-sulfur (Fe-S) centers, to quinones in the respiratory chain. The immediate electron acceptor for the enzyme in this species is believed to be ubiquinone. Couples the redox reaction to proton translocation (for every two electrons transferred, four hydrogen ions are translocated across the cytoplasmic membrane), and thus conserves the redox energy in a proton gradient. This Shigella sonnei (strain Ss046) protein is NADH-quinone oxidoreductase subunit I.